Reading from the N-terminus, the 490-residue chain is Dual specificity protein kinase CLK3 (490 aa).

Positions 1–138 (MHHCKRYRSP…SKRSSRSVED (138 aa)) are disordered. Residue Tyr-7 is modified to Phosphotyrosine. Ser-9, Ser-49, Ser-51, Ser-67, Ser-76, and Ser-78 each carry phosphoserine. Basic and acidic residues-rich tracts occupy residues 26–56 (YSRE…DRIP) and 63–76 (EHRD…EERS). Basic residues predominate over residues 88–116 (RSRHRRRSRERGPYRTRKHAHHCHKRRTR). The segment covering 117 to 130 (SCSSASSRSQQSSK) has biased composition (low complexity). Ser-135 carries the phosphoserine modification. A Protein kinase domain is found at 156–472 (YEIVGNLGEG…LAEALLHPFF (317 aa)). ATP-binding positions include 162–170 (LGEGTFGKV) and Lys-186. Residue Asp-283 is the Proton acceptor of the active site.

Belongs to the protein kinase superfamily. CMGC Ser/Thr protein kinase family. Lammer subfamily. In terms of processing, autophosphorylates on all three types of residues.

It localises to the nucleus. The protein resides in the cytoplasm. It is found in the cytoplasmic vesicle. The protein localises to the secretory vesicle. Its subcellular location is the acrosome. The catalysed reaction is L-seryl-[protein] + ATP = O-phospho-L-seryl-[protein] + ADP + H(+). It carries out the reaction L-threonyl-[protein] + ATP = O-phospho-L-threonyl-[protein] + ADP + H(+). It catalyses the reaction L-tyrosyl-[protein] + ATP = O-phospho-L-tyrosyl-[protein] + ADP + H(+). Its activity is regulated as follows. Leucettine L41 inhibits its kinase activity and affects the regulation of alternative splicing mediated by phosphorylation of SR proteins. Dual specificity kinase acting on both serine/threonine and tyrosine-containing substrates. Phosphorylates serine- and arginine-rich (SR) proteins of the spliceosomal complex. May be a constituent of a network of regulatory mechanisms that enable SR proteins to control RNA splicing and can cause redistribution of SR proteins from speckles to a diffuse nucleoplasmic distribution. Phosphorylates SRSF1 and SRSF3. Regulates the alternative splicing of tissue factor (F3) pre-mRNA in endothelial cells. This is Dual specificity protein kinase CLK3 (Clk3) from Rattus norvegicus (Rat).